Here is a 492-residue protein sequence, read N- to C-terminus: GPI alpha-1,6-mannosyltransferase 2 (492 aa).

Topologically, residues 1–13 (MGLLDPSQKEVLK) are cytoplasmic. The helical transmembrane segment at 14-34 (FAVSCRILTLVLQALFNIIIP) threads the bilayer. The Lumenal segment spans residues 35-77 (DHHADAFSPPRLAPSGSVDQLVEALLGGLSRWDAEHFLFIAEH). Residues 78–98 (GYLYEHNFAFFPGFPLALLMG) traverse the membrane as a helical segment. At 99-113 (TELLRPLQGLLSERS) the chain is on the cytoplasmic side. A helical transmembrane segment spans residues 114–134 (CLLVSVALLNSLFSVLAAVAL). Topologically, residues 135–136 (HD) are lumenal. Residues 137 to 157 (LGCLVLHCPRQAFCAALLFCL) traverse the membrane as a helical segment. At 158 to 161 (SPAN) the chain is on the cytoplasmic side. Residues 162–182 (VFLAAGYSEALFAFLTFSAMG) form a helical membrane-spanning segment. Over 183–192 (QLERGRGWAS) the chain is Lumenal. The chain crosses the membrane as a helical span at residues 193-213 (GLLFALAAGVRSNGLVSVGFL). Residues 214 to 234 (LHSQCRGFCSSLVVLDPLKGL) are Cytoplasmic-facing. A helical membrane pass occupies residues 235 to 255 (VKLMASLCLSVLTVSLPFALF). The Lumenal segment spans residues 256–327 (QYYAYTQFCF…RYYELRQVPN (72 aa)). A helical transmembrane segment spans residues 328–348 (FLLATPVTVLVVWATWTYVTA). At 349-378 (HPWLCLTLGLQRTKDRESLEKPHPGFLSAK) the chain is on the cytoplasmic side. A helical transmembrane segment spans residues 379–399 (VFVYLVHAAALLAFGGLCMHV). At 400–468 (QVLTRLLGSS…NWKTCSPVTK (69 aa)) the chain is on the lumenal side. Residues 469–489 (CILVYFLTYWLLGLIMHCNFL) form a helical membrane-spanning segment. Residues 490–492 (PWT) are Cytoplasmic-facing.

It belongs to the PIGV family. Post-translationally, not N-glycosylated.

The protein localises to the endoplasmic reticulum membrane. It functions in the pathway glycolipid biosynthesis; glycosylphosphatidylinositol-anchor biosynthesis. Its function is as follows. Alpha-1,6-mannosyltransferase that catalyzes the transfer of the second mannose, via an alpha-1,6 bond, from a dolichol-phosphate-mannose (Dol-P-Man) to the alpha-D-Man-(1-&gt;4)-alpha-D-GlcN-(1-&gt;6)-(1-radyl,2-acyl-sn-glycero-3-phospho)-2-acyl-inositol (also termed H2) intermediate to generate an alpha-D-Man-(1-&gt;6)-alpha-D-Man-(1-&gt;4)-alpha-D-GlcN-(1-&gt;6)-(1-radyl,2-acyl-sn-glycero-3-phospho)-2-acyl-inositol (also termed H3) and participates in the seventh step of the glycosylphosphatidylinositol-anchor biosynthesis. Also transfers the second mannose on a 2-PEtn-alpha-D-Man-(1-&gt;4)-alpha-D-GlcN-(1-&gt;6)-(1-radyl,2-acyl-sn-glycero-3-phospho)-2-acyl-inositol (also termed H5). This chain is GPI alpha-1,6-mannosyltransferase 2, found in Rattus norvegicus (Rat).